The chain runs to 797 residues: Plakophilin-3 (797 aa).

Positions 56-82 (QLGQQPRHNGAAEPEPEAETARGTSRG) are disordered. Arginine 81 is subject to Omega-N-methylarginine. Phosphoserine is present on residues serine 123, serine 180, and serine 183. Phosphotyrosine; by SRC is present on tyrosine 195. 2 positions are modified to phosphoserine: serine 238 and serine 240. Position 250 is a phosphothreonine (threonine 250). An Omega-N-methylarginine modification is found at arginine 261. A required for interaction with SFN region spans residues 283-288 (SLSLSL). Residues serine 285, serine 313, serine 314, and serine 331 each carry the phosphoserine modification. The required for interaction with GSK3B stretch occupies residues 294–724 (LPDVHGFNSY…AEVLVNIIAV (431 aa)). ARM repeat units follow at residues 305 to 348 (SHRT…HKCY), 351 to 390 (AAAK…NLIY), 393 to 432 (ADNK…NLSS), 449 to 487 (TDLV…NLSS), 491 to 536 (ATRQ…NLSY), 596 to 637 (PKGL…NITA), 645 to 684 (VLSR…NLSR), and 689 to 730 (KDEM…NLVV). Residues 516–797 (AGKCEDKSVE…GYRKEDFLGP (282 aa)) are required for binding to PKP2 mRNA.

It belongs to the beta-catenin family. In terms of assembly, found in a complex composed of CDH1, RAP1A and PKP3; PKP3 acts as a scaffold protein within the complex, the complex is required for CDH1 localization to mature desmosome cell junctions. Interacts with FXR1; the interaction facilitates the binding of PKP3 to PKP2 mRNA. Interacts (via ARM repeats) with GSK3B; the interaction may be involved in PKP3 protein degradation. Interacts with hyperphosphorylated and hypophosphorylated RB1; the interaction inhibits RB1 interaction with and repression of the transcription factor E2F1, potentially via sequestering RB1 to the cytoplasm. Interacts with CDKN1A; the interaction sequesters CDKN1A to the cytoplasm thereby repressing its role as an inhibitor of CDK4- and CDK6-driven RB1 phosphorylation. Interacts (via N-terminus) with SFN; the interaction maintains the cytoplasmic pool of PKP3, facilitates PKP3 exchange at desmosomes and restricts PKP3 localization to existing desmosome cell junctions. Interacts (via N-terminus) with JUP; the interaction is required for PKP3 localization to desmosome cell-cell junctions. Phosphorylated at Ser-285 when localized to the cytoplasm, PKP3 at desmosome cell junctions is not phosphorylated. Phosphorylation at Try-195 by SRC is induced by reactive oxygen species and potentially acts as a release mechanism from desmosome cell-cell junctions. In terms of tissue distribution, expressed in the epidermis of the skin, in squamous non-cornifying epithelial cells in the vagina, single layer epithelia of the duodenum and pancreas acini and non-epithelial dendritic reticulum cells of lymph node follicles (at protein level). Expressed in the oral cavity mucosa, epidermis and small intestine epithelium (at protein level). As to expression, expressed in the oral cavity mucosa and epithelial cells of the crypts and villi in the small intestine (at protein level). Expressed in the epidermis with more abundant expression found in the basal and low spinous cells (at protein level).

Its subcellular location is the nucleus. It is found in the cell junction. It localises to the desmosome. The protein resides in the cytoplasm. The protein localises to the cell membrane. Its subcellular location is the adherens junction. A component of desmosome cell-cell junctions which are required for positive regulation of cellular adhesion. Required for the localization of DSG2, DSP and PKP2 to mature desmosome junctions. May also play a role in the maintenance of DSG3 protein abundance in keratinocytes. Required for the formation of DSP-containing desmosome precursors in the cytoplasm during desmosome assembly. Also regulates the accumulation of CDH1 to mature desmosome junctions, via cAMP-dependent signaling and its interaction with activated RAP1A. Positively regulates the stabilization of PKP2 mRNA and therefore protein abundance, via its interaction with FXR1, may also regulate the protein abundance of DSP via the same mechanism. May also regulate the protein abundance of the desmosome component PKP1. Required for the organization of desmosome junctions at intercellular borders between basal keratinocytes of the epidermis, as a result plays a role in maintenance of the dermal barrier and regulation of the dermal inflammatory response. Required during epidermal keratinocyte differentiation for cell adherence at tricellular cell-cell contacts, via regulation of the timely formation of adherens junctions and desmosomes in a calcium-dependent manner, and may also play a role in the organization of the intracellular actin fiber belt. Acts as a negative regulator of the inflammatory response in hematopoietic cells of the skin and intestine, via modulation of proinflammatory cytokine production. Important for epithelial barrier maintenance in the intestine to reduce intestinal permeability, thereby plays a role in protection from intestinal-derived endotoxemia. Required for the development of hair follicles, via a role in the regulation of inner root sheaf length, correct alignment and anterior-posterior polarity of hair follicles. Promotes proliferation and cell-cycle G1/S phase transition of keratinocytes. Promotes E2F1-driven transcription of G1/S phase promoting genes by acting to release E2F1 from its inhibitory interaction with RB1, via sequestering RB1 and CDKN1A to the cytoplasm and thereby increasing CDK4- and CDK6-driven phosphorylation of RB1. May act as a scaffold protein to facilitate MAPK phosphorylation of RPS6KA protein family members and subsequently promote downstream EGFR signaling. May play a role in the positive regulation of transcription of Wnt-mediated TCF-responsive target genes. In Homo sapiens (Human), this protein is Plakophilin-3 (PKP3).